The following is a 372-amino-acid chain: Transaldolase 2 (372 aa).

Catalysis depends on lysine 140, which acts as the Schiff-base intermediate with substrate.

This sequence belongs to the transaldolase family. Type 2 subfamily.

Its subcellular location is the cytoplasm. It catalyses the reaction D-sedoheptulose 7-phosphate + D-glyceraldehyde 3-phosphate = D-erythrose 4-phosphate + beta-D-fructose 6-phosphate. Its pathway is carbohydrate degradation; pentose phosphate pathway; D-glyceraldehyde 3-phosphate and beta-D-fructose 6-phosphate from D-ribose 5-phosphate and D-xylulose 5-phosphate (non-oxidative stage): step 2/3. Transaldolase is important for the balance of metabolites in the pentose-phosphate pathway. This Streptomyces coelicolor (strain ATCC BAA-471 / A3(2) / M145) protein is Transaldolase 2.